We begin with the raw amino-acid sequence, 138 residues long: Sporulation-specific cell division protein SsgB (138 aa).

Belongs to the SsgA family. Monomer. Interacts with SsgA. Interacts with FtsZ (via N-terminus).

The protein localises to the cell septum. Its function is as follows. Involved in sporulation-specific cell division. Required for early stages of sporulation. Important in the process of growth cessation prior to sporulation-specific cell division. Recruits cell division protein FtsZ to the future septum sites and tethers the contractile ring structure (Z ring) to the cytoplasmic membrane during sporulation. Stimulates polymerization and filament length of FtsZ in vitro. This is Sporulation-specific cell division protein SsgB from Thermobifida fusca (strain YX).